The following is a 209-amino-acid chain: Uridine kinase (209 aa).

12-19 (GGSASGKT) is a binding site for ATP.

This sequence belongs to the uridine kinase family.

The protein resides in the cytoplasm. It carries out the reaction uridine + ATP = UMP + ADP + H(+). It catalyses the reaction cytidine + ATP = CMP + ADP + H(+). The protein operates within pyrimidine metabolism; CTP biosynthesis via salvage pathway; CTP from cytidine: step 1/3. It participates in pyrimidine metabolism; UMP biosynthesis via salvage pathway; UMP from uridine: step 1/1. The sequence is that of Uridine kinase from Chloroflexus aggregans (strain MD-66 / DSM 9485).